Here is a 166-residue protein sequence, read N- to C-terminus: 6,7-dimethyl-8-ribityllumazine synthase (166 aa).

5-amino-6-(D-ribitylamino)uracil is bound by residues Phe-22, Ser-56–Glu-58, and Ala-80–Ile-82. Position 85–86 (Glu-85–Thr-86) interacts with (2S)-2-hydroxy-3-oxobutyl phosphate. Catalysis depends on His-88, which acts as the Proton donor. Phe-113 lines the 5-amino-6-(D-ribitylamino)uracil pocket. Arg-127 contributes to the (2S)-2-hydroxy-3-oxobutyl phosphate binding site.

The protein belongs to the DMRL synthase family.

It catalyses the reaction (2S)-2-hydroxy-3-oxobutyl phosphate + 5-amino-6-(D-ribitylamino)uracil = 6,7-dimethyl-8-(1-D-ribityl)lumazine + phosphate + 2 H2O + H(+). Its pathway is cofactor biosynthesis; riboflavin biosynthesis; riboflavin from 2-hydroxy-3-oxobutyl phosphate and 5-amino-6-(D-ribitylamino)uracil: step 1/2. Functionally, catalyzes the formation of 6,7-dimethyl-8-ribityllumazine by condensation of 5-amino-6-(D-ribitylamino)uracil with 3,4-dihydroxy-2-butanone 4-phosphate. This is the penultimate step in the biosynthesis of riboflavin. The protein is 6,7-dimethyl-8-ribityllumazine synthase of Thermotoga neapolitana (strain ATCC 49049 / DSM 4359 / NBRC 107923 / NS-E).